A 427-amino-acid chain; its full sequence is Peptidase B (427 aa).

Residues lysine 195 and aspartate 200 each contribute to the Mn(2+) site. The active site involves lysine 207. Positions 218, 277, and 279 each coordinate Mn(2+). The active site involves arginine 281.

It belongs to the peptidase M17 family. In terms of assembly, homohexamer. Requires Mn(2+) as cofactor.

The protein localises to the cytoplasm. It carries out the reaction Release of an N-terminal amino acid, Xaa, from a peptide or arylamide. Xaa is preferably Glu or Asp but may be other amino acids, including Leu, Met, His, Cys and Gln.. Probably plays an important role in intracellular peptide degradation. This is Peptidase B from Escherichia coli O139:H28 (strain E24377A / ETEC).